We begin with the raw amino-acid sequence, 276 residues long: 3-keto-5-aminohexanoate cleavage enzyme (276 aa).

A (5S)-5-amino-3-oxohexanoate-binding site is contributed by glutamate 14. Zn(2+) contacts are provided by histidine 46 and histidine 48. Positions 82, 85, 106, and 108 each coordinate (5S)-5-amino-3-oxohexanoate. Glutamate 230 contributes to the Zn(2+) binding site.

Belongs to the BKACE family. Kce subfamily. Homotetramer. It depends on Zn(2+) as a cofactor.

The enzyme catalyses (5S)-5-amino-3-oxohexanoate + acetyl-CoA = (3S)-3-aminobutanoyl-CoA + acetoacetate. It functions in the pathway amino-acid degradation; L-lysine degradation via acetate pathway. Involved in the anaerobic fermentation of lysine. Catalyzes the reversible reaction between 3-keto-5-aminohexanoate (KAH) and acetyl-CoA to form 3-aminobutyryl-CoA and acetoacetate. The reaction involves the deprotonation of KAH, the nucleophilic addition onto acetyl-CoA and the intramolecular transfer of the CoA moiety. The chain is 3-keto-5-aminohexanoate cleavage enzyme from Cloacimonas acidaminovorans (strain Evry).